Reading from the N-terminus, the 332-residue chain is PRKC apoptosis WT1 regulator protein (332 aa).

2 stretches are compositionally biased toward polar residues: residues 1–14 and 52–62; these read MATG…STTD and AQTTAAGTSEL. The interval 1–253 is disordered; the sequence is MATGGYRSSG…HNRDTSAPAN (253 aa). The B30.2/SPRY domain-binding motif signature appears at 61–65; the sequence is ELNHG. The segment covering 65-79 has biased composition (low complexity); it reads GPAGAAAPAAPGPGA. The Nuclear localization signal motif lies at 137-153; the sequence is RKGKGQIEKRKLREKRR. The tract at residues 137–195 is selective for apoptosis induction in cancer cells (SAC); the sequence is RKGKGQIEKRKLREKRRSTGVVNIPAAECLDEYEDDEAGQKERKREDAITQQNTIQNEA. At Thr-155 the chain carries Phosphothreonine; by PKA. A compositionally biased stretch (basic and acidic residues) spans 174–184; that stretch reads AGQKERKREDA. Positions 176–198 form a coiled coil; the sequence is QKERKREDAITQQNTIQNEAASL. A compositionally biased stretch (polar residues) spans 185–195; the sequence is ITQQNTIQNEA. Ser-223 carries the post-translational modification Phosphoserine. Basic and acidic residues predominate over residues 234-247; that stretch reads PRTDRSGFSRHNRD. The interval 292-332 is leucine-zipper; it reads IGKLKEEIDLLNRDLDDMEDENEQLKQENKTLLKVVGQLTR.

In terms of assembly, homooligomer. Interacts (via the C-terminal region) with WT1. Interacts with THAP1. Interacts with AATF. Interacts with BACE1. Interacts with SPSB1 (via B30.2/SPRY domain); this interaction is direct and occurs in association with the Elongin BC complex. Interacts with SPSB2 (via B30.2/SPRY domain); this interaction occurs in association with the Elongin BC complex. Interacts with SPSB4 (via B30.2/SPRY domain); this interaction occurs in association with the Elongin BC complex. Component of a ternary complex composed of SQSTM1 and PRKCZ. Interacts with actin. Preferentially phosphorylated at the Thr-155 by PKC in cancer cells.

Its subcellular location is the cytoplasm. It localises to the nucleus. Its function is as follows. Pro-apoptotic protein capable of selectively inducing apoptosis in cancer cells, sensitizing the cells to diverse apoptotic stimuli and causing regression of tumors in animal models. Induces apoptosis in certain cancer cells by activation of the Fas prodeath pathway and coparallel inhibition of NF-kappa-B transcriptional activity. Inhibits the transcriptional activation and augments the transcriptional repression mediated by WT1. Down-regulates the anti-apoptotic protein BCL2 via its interaction with WT1. Also seems to be a transcriptional repressor by itself. May be directly involved in regulating the amyloid precursor protein (APP) cleavage activity of BACE1. The polypeptide is PRKC apoptosis WT1 regulator protein (Pawr) (Rattus norvegicus (Rat)).